Here is a 171-residue protein sequence, read N- to C-terminus: UPF0312 protein SE_0264 (171 aa).

It belongs to the UPF0312 family.

In Staphylococcus epidermidis (strain ATCC 12228 / FDA PCI 1200), this protein is UPF0312 protein SE_0264.